The following is an 821-amino-acid chain: Condensin-2 complex subunit kle-2 (821 aa).

The interval 389–426 (VMQNDEPNTSRRPDENYAPMDFDDDFGGGGDDDDDDYI) is disordered. The segment covering 409-424 (DFDDDFGGGGDDDDDD) has biased composition (acidic residues). A coiled-coil region spans residues 529 to 561 (TAILAEKKRRIKEKTAKIREARIQNMQRKRTAR).

This sequence belongs to the CND2 H2 (condensin-2 subunit 2) family. Component of the condensin II complex, which contains the mix-1/SMC2 and smc-4/SMC4 heterodimer, and three non SMC subunits, capg-2, kle-2 and hcp-6 that probably regulate the complex. Within the complex, interacts with mix-1, smc-4, capg-2 and hcp-6.

The protein localises to the nucleus. It is found in the chromosome. Its subcellular location is the centromere. Regulatory subunit of the condensin II complex, a complex that seems to play a role in prophase chromosome condensation and in chromosome segregation in mitosis and in meiosis. The protein is Condensin-2 complex subunit kle-2 (kle-2) of Caenorhabditis elegans.